The sequence spans 423 residues: Tyrosine--tRNA ligase (423 aa).

Residue Tyr35 coordinates L-tyrosine. The 'HIGH' region motif lies at 40 to 49; sequence PTAASLHVGH. Positions 170 and 174 each coordinate L-tyrosine. A 'KMSKS' region motif is present at residues 231-235; it reads KFGKS. Lys234 lines the ATP pocket. The region spanning 353 to 419 is the S4 RNA-binding domain; sequence GPLVDLLVEV…GKKNLAAVEV (67 aa).

Belongs to the class-I aminoacyl-tRNA synthetase family. TyrS type 1 subfamily. As to quaternary structure, homodimer.

It localises to the cytoplasm. The catalysed reaction is tRNA(Tyr) + L-tyrosine + ATP = L-tyrosyl-tRNA(Tyr) + AMP + diphosphate + H(+). Its function is as follows. Catalyzes the attachment of tyrosine to tRNA(Tyr) in a two-step reaction: tyrosine is first activated by ATP to form Tyr-AMP and then transferred to the acceptor end of tRNA(Tyr). This is Tyrosine--tRNA ligase from Streptomyces griseus subsp. griseus (strain JCM 4626 / CBS 651.72 / NBRC 13350 / KCC S-0626 / ISP 5235).